An 829-amino-acid polypeptide reads, in one-letter code: DNA ligase (829 aa).

NAD(+) contacts are provided by residues 38 to 42 (DAEYD), 87 to 88 (SL), and Glu-127. The N6-AMP-lysine intermediate role is filled by Lys-129. Residues Arg-150, Glu-187, Lys-305, and Lys-329 each coordinate NAD(+). Residues Cys-455, Cys-458, Cys-473, and Cys-479 each contribute to the Zn(2+) site. The disordered stretch occupies residues 534 to 564 (ETADKGSSENENGDAETVSGDLSKYNTQNGK). A BRCT domain is found at 752–829 (GINKAVAGKT…SEAELLTLLC (78 aa)).

The protein belongs to the NAD-dependent DNA ligase family. LigA subfamily. The cofactor is Mg(2+). Requires Mn(2+) as cofactor.

It catalyses the reaction NAD(+) + (deoxyribonucleotide)n-3'-hydroxyl + 5'-phospho-(deoxyribonucleotide)m = (deoxyribonucleotide)n+m + AMP + beta-nicotinamide D-nucleotide.. Functionally, DNA ligase that catalyzes the formation of phosphodiester linkages between 5'-phosphoryl and 3'-hydroxyl groups in double-stranded DNA using NAD as a coenzyme and as the energy source for the reaction. It is essential for DNA replication and repair of damaged DNA. The sequence is that of DNA ligase from Neisseria gonorrhoeae (strain ATCC 700825 / FA 1090).